Reading from the N-terminus, the 473-residue chain is Photosystem II CP43 reaction center protein (473 aa).

Positions 1 to 14 (MKNLYSLRRFYHVE) are excised as a propeptide. T15 carries the N-acetylthreonine modification. T15 is modified (phosphothreonine). 5 helical membrane passes run 69-93 (LFEV…PHLA), 134-155 (LVGP…KDKN), 178-200 (KAMY…RIIS), 255-275 (KPWA…LSYS), and 291-312 (WFNT…ASQS). E367 lines the [CaMn4O5] cluster pocket. Residues 447–471 (RARAAAAGFEKGIDRDNEPVLSMRP) traverse the membrane as a helical segment.

Belongs to the PsbB/PsbC family. PsbC subfamily. PSII is composed of 1 copy each of membrane proteins PsbA, PsbB, PsbC, PsbD, PsbE, PsbF, PsbH, PsbI, PsbJ, PsbK, PsbL, PsbM, PsbT, PsbX, PsbY, PsbZ, Psb30/Ycf12, at least 3 peripheral proteins of the oxygen-evolving complex and a large number of cofactors. It forms dimeric complexes. Binds multiple chlorophylls and provides some of the ligands for the Ca-4Mn-5O cluster of the oxygen-evolving complex. It may also provide a ligand for a Cl- that is required for oxygen evolution. PSII binds additional chlorophylls, carotenoids and specific lipids. is required as a cofactor.

It localises to the plastid. The protein resides in the chloroplast thylakoid membrane. In terms of biological role, one of the components of the core complex of photosystem II (PSII). It binds chlorophyll and helps catalyze the primary light-induced photochemical processes of PSII. PSII is a light-driven water:plastoquinone oxidoreductase, using light energy to abstract electrons from H(2)O, generating O(2) and a proton gradient subsequently used for ATP formation. The protein is Photosystem II CP43 reaction center protein of Chlorella vulgaris (Green alga).